The chain runs to 587 residues: Potassium-transporting ATPase potassium-binding subunit (587 aa).

A run of 4 helical transmembrane segments spans residues 1 to 21, 60 to 80, 89 to 109, and 131 to 151; these read MSTS…LWVT, PVYA…LYLL, LNLG…VSFM, and GLAV…IAVV. A disordered region spans residues 162–188; it reads AVGGPGGPNGPGGPGGPNGPGAGSRDD. Residues 164–183 show a composition bias toward gly residues; the sequence is GGPGGPNGPGGPGGPNGPGA. The next 7 helical transmembrane spans lie at 208–228, 280–300, 314–334, 409–429, 449–469, 514–534, and 557–577; these read IRIL…GGAI, PTSW…FSLP, LAIV…NAAF, GLYG…LMIG, LYFL…MGLP, ALGL…LGMA, and FAGM…FPAL.

It belongs to the KdpA family. As to quaternary structure, the system is composed of three essential subunits: KdpA, KdpB and KdpC.

The protein localises to the cell membrane. In terms of biological role, part of the high-affinity ATP-driven potassium transport (or Kdp) system, which catalyzes the hydrolysis of ATP coupled with the electrogenic transport of potassium into the cytoplasm. This subunit binds the extracellular potassium ions and delivers the ions to the membrane domain of KdpB through an intramembrane tunnel. The sequence is that of Potassium-transporting ATPase potassium-binding subunit from Frankia alni (strain DSM 45986 / CECT 9034 / ACN14a).